A 203-amino-acid chain; its full sequence is Dual-action ribosomal maturation protein DarP (203 aa).

Disordered regions lie at residues 1-31 (MPPM…SKSQ) and 182-203 (GGAS…DDEA). Residues 186–203 (DSDDEAADDAGDDHDDEA) are compositionally biased toward acidic residues.

Belongs to the DarP family.

It localises to the cytoplasm. In terms of biological role, member of a network of 50S ribosomal subunit biogenesis factors which assembles along the 30S-50S interface, preventing incorrect 23S rRNA structures from forming. Promotes peptidyl transferase center (PTC) maturation. This Burkholderia cenocepacia (strain HI2424) protein is Dual-action ribosomal maturation protein DarP.